We begin with the raw amino-acid sequence, 491 residues long: Bifunctional protein GlmU (491 aa).

The tract at residues 1–238 (MTTQPAVPAA…EWEIRGVNDR (238 aa)) is pyrophosphorylase. Residues 14 to 17 (LAAG), lysine 28, glutamine 81, 86 to 87 (GT), 110 to 112 (YGD), glycine 149, glutamate 163, asparagine 178, and asparagine 236 contribute to the UDP-N-acetyl-alpha-D-glucosamine site. Position 112 (aspartate 112) interacts with Mg(2+). Asparagine 236 serves as a coordination point for Mg(2+). The linker stretch occupies residues 239-259 (AQLADLAAEANRRTLRRWMLA). The N-acetyltransferase stretch occupies residues 260 to 491 (GVTIADPATT…TASTDREIQP (232 aa)). Positions 341 and 359 each coordinate UDP-N-acetyl-alpha-D-glucosamine. Residue histidine 371 is the Proton acceptor of the active site. UDP-N-acetyl-alpha-D-glucosamine-binding residues include tyrosine 374 and asparagine 385. Acetyl-CoA-binding positions include alanine 388, 394-395 (NY), serine 413, and alanine 431. The segment at 460–491 (AKRPGTPAAEAAQRANDESTGTTASTDREIQP) is disordered.

This sequence in the N-terminal section; belongs to the N-acetylglucosamine-1-phosphate uridyltransferase family. It in the C-terminal section; belongs to the transferase hexapeptide repeat family. Homotrimer. Requires Mg(2+) as cofactor.

The protein localises to the cytoplasm. It carries out the reaction alpha-D-glucosamine 1-phosphate + acetyl-CoA = N-acetyl-alpha-D-glucosamine 1-phosphate + CoA + H(+). It catalyses the reaction N-acetyl-alpha-D-glucosamine 1-phosphate + UTP + H(+) = UDP-N-acetyl-alpha-D-glucosamine + diphosphate. It functions in the pathway nucleotide-sugar biosynthesis; UDP-N-acetyl-alpha-D-glucosamine biosynthesis; N-acetyl-alpha-D-glucosamine 1-phosphate from alpha-D-glucosamine 6-phosphate (route II): step 2/2. The protein operates within nucleotide-sugar biosynthesis; UDP-N-acetyl-alpha-D-glucosamine biosynthesis; UDP-N-acetyl-alpha-D-glucosamine from N-acetyl-alpha-D-glucosamine 1-phosphate: step 1/1. Its pathway is bacterial outer membrane biogenesis; LPS lipid A biosynthesis. Its function is as follows. Catalyzes the last two sequential reactions in the de novo biosynthetic pathway for UDP-N-acetylglucosamine (UDP-GlcNAc). The C-terminal domain catalyzes the transfer of acetyl group from acetyl coenzyme A to glucosamine-1-phosphate (GlcN-1-P) to produce N-acetylglucosamine-1-phosphate (GlcNAc-1-P), which is converted into UDP-GlcNAc by the transfer of uridine 5-monophosphate (from uridine 5-triphosphate), a reaction catalyzed by the N-terminal domain. This chain is Bifunctional protein GlmU, found in Kineococcus radiotolerans (strain ATCC BAA-149 / DSM 14245 / SRS30216).